The primary structure comprises 161 residues: DNA-binding protein inhibitor ID-4 (161 aa).

The 53-residue stretch at 52–104 (AAEAAADEPALCLQCDMNDCYSRLRRLVPTIPPNKKVSKVEILQHVIDYILDL) folds into the bHLH domain. Positions 117-126 (QPPPPAPPHH) are enriched in pro residues. The tract at residues 117–161 (QPPPPAPPHHPAGTCPAAPPRTPLTALNTDPAGAVNKQGDSILCR) is disordered.

In terms of assembly, heterodimer with other HLH proteins.

The protein resides in the nucleus. Functionally, transcriptional regulator (lacking a basic DNA binding domain) which negatively regulates the basic helix-loop-helix (bHLH) transcription factors by forming heterodimers and inhibiting their DNA binding and transcriptional activity. Implicated in regulating a variety of cellular processes, including cellular growth, senescence, differentiation, apoptosis, angiogenesis, and neoplastic transformation. The sequence is that of DNA-binding protein inhibitor ID-4 (ID4) from Homo sapiens (Human).